Reading from the N-terminus, the 147-residue chain is Endoribonuclease YbeY (147 aa).

Zn(2+) is bound by residues His-108, His-112, and His-118.

It belongs to the endoribonuclease YbeY family. Requires Zn(2+) as cofactor.

The protein resides in the cytoplasm. In terms of biological role, single strand-specific metallo-endoribonuclease involved in late-stage 70S ribosome quality control and in maturation of the 3' terminus of the 16S rRNA. The chain is Endoribonuclease YbeY from Sulfurovum sp. (strain NBC37-1).